The primary structure comprises 714 residues: Polyribonucleotide nucleotidyltransferase (714 aa).

Mg(2+)-binding residues include Asp486 and Asp492. The KH domain occupies 553–612 (PRIITMKINPEKIRDVIGKGGAVIRALTEETGTTIDIEEDGTIKIGCTSAEAGEEAKKRI). The S1 motif domain maps to 622 to 690 (GQVYDGTVLK…DKGRVRLSAK (69 aa)).

This sequence belongs to the polyribonucleotide nucleotidyltransferase family. Mg(2+) serves as cofactor.

The protein resides in the cytoplasm. The enzyme catalyses RNA(n+1) + phosphate = RNA(n) + a ribonucleoside 5'-diphosphate. Functionally, involved in mRNA degradation. Catalyzes the phosphorolysis of single-stranded polyribonucleotides processively in the 3'- to 5'-direction. The chain is Polyribonucleotide nucleotidyltransferase from Methylobacillus flagellatus (strain ATCC 51484 / DSM 6875 / VKM B-1610 / KT).